Consider the following 289-residue polypeptide: MKVLVNNHLVEREDATVDIEDRGYQFGDGVYEVVRLYNGKFFTYNEHIDRLYASAAKIDLVIPYSKEELRELLEKLVAENNINTGNVYLQVTRGVQNPRNHVIPDDFPLEGVLTAAAREVPRNERQFVEGGTAITEEDVRWLRCDIKSLNLLGNILAKNKAHQQNALEAILHRGEQVTECSASNVSIIKDGVLWTHAADNLILNGITRQVIIDVAKKNGIPVKEADFTLTDLREADEVFISSTTIEITPITHIDGVQVADGKRGPITAQLHQYFVEEITRACGELVFAK.

Substrate is bound at residue Tyr31. Arg50 serves as a coordination point for pyridoxal 5'-phosphate. Substrate contacts are provided by Arg99 and His101. N6-(pyridoxal phosphate)lysine is present on Lys147. Glu179 contacts pyridoxal 5'-phosphate.

Belongs to the class-IV pyridoxal-phosphate-dependent aminotransferase family. Homodimer. Requires pyridoxal 5'-phosphate as cofactor.

It catalyses the reaction D-alanine + 2-oxoglutarate = D-glutamate + pyruvate. In terms of biological role, acts on the D-isomers of alanine, leucine, aspartate, glutamate, aminobutyrate, norvaline and asparagine. The enzyme transfers an amino group from a substrate D-amino acid to the pyridoxal phosphate cofactor to form pyridoxamine and an alpha-keto acid in the first half-reaction. The second half-reaction is the reverse of the first, transferring the amino group from the pyridoxamine to a second alpha-keto acid to form the product D-amino acid via a ping-pong mechanism. This is an important process in the formation of D-alanine and D-glutamate, which are essential bacterial cell wall components. This chain is D-alanine aminotransferase (dat), found in Listeria monocytogenes serovar 1/2a (strain ATCC BAA-679 / EGD-e).